The chain runs to 38 residues: Toxin Bot33 (38 aa).

Disulfide bonds link cysteine 8-cysteine 28, cysteine 14-cysteine 33, and cysteine 18-cysteine 35.

The protein belongs to the short scorpion toxin superfamily. Potassium channel inhibitor family. As to expression, expressed by the venom gland.

The protein resides in the secreted. Its function is as follows. A probable toxin that has no activity on the tested mammalian voltage-gated potassium channels (when tested at 1 uM) and is not toxic to mice. It resembles alpha toxins that block voltage-gated potassium channels. This chain is Toxin Bot33, found in Buthus occitanus tunetanus (Common European scorpion).